Here is a 473-residue protein sequence, read N- to C-terminus: MSDFMTEQEFRIEHDTMGEVKVPAKALWQAQTQRAVENFPISGRGLESAQIRAMGLLKAACAQVNKDSGALDAEKADAIIAAGKEIASGKHDAEFPIDVFQTGSGTSSNMNTNEVIASIAKANGVEVHPNDHVNMGQSSNDTFPTATHVAATEAAVNDLIPGLKVLHESLAKKANEWSEVVKSGRTHLMDAVPVTLGQEFGGYARQIQLGIERVEATLPRLGELAIGGTAAGTGINTSADFGGKVVAELINLTDVKELKEAENHFEAQAARDALVEFSGAMRVIAVSLYKIANDIRLMGSGPLTGLGEIRLPDLQPGSSIMPGKVNPVLCETATQVSAQVIGNDAAVAFSGTQGQFELNVFIPVMARNVLESARLLANTSRVFATRLVDGIEPNEAHMKELAESSPSIVTPLNSAIGYEAAAKVAKTALAEGKTIRQTVIDLGLVDGEKLTEEELDKRLDVLAMAHTERENKF.

Substrate is bound by residues 104–106 (SGT), 128–131 (HPND), 138–140 (SSN), and Thr186. Catalysis depends on His187, which acts as the Proton donor/acceptor. Ser318 is an active-site residue. Residues Ser319 and 324 to 326 (KVN) contribute to the substrate site.

This sequence belongs to the class-II fumarase/aspartase family. Fumarase subfamily. Homotetramer.

The protein localises to the cytoplasm. It catalyses the reaction (S)-malate = fumarate + H2O. It participates in carbohydrate metabolism; tricarboxylic acid cycle; (S)-malate from fumarate: step 1/1. Functionally, involved in the TCA cycle. Catalyzes the stereospecific interconversion of fumarate to L-malate. The sequence is that of Fumarate hydratase class II from Corynebacterium glutamicum (strain ATCC 13032 / DSM 20300 / JCM 1318 / BCRC 11384 / CCUG 27702 / LMG 3730 / NBRC 12168 / NCIMB 10025 / NRRL B-2784 / 534).